We begin with the raw amino-acid sequence, 475 residues long: Ribulose bisphosphate carboxylase large chain (475 aa).

Positions 1–2 (MS) are excised as a propeptide. Proline 3 carries the post-translational modification N-acetylproline. Position 14 is an N6,N6,N6-trimethyllysine (lysine 14). The substrate site is built by asparagine 123 and threonine 173. The Proton acceptor role is filled by lysine 175. Lysine 177 contributes to the substrate binding site. 3 residues coordinate Mg(2+): lysine 201, aspartate 203, and glutamate 204. Lysine 201 carries the N6-carboxylysine modification. The Proton acceptor role is filled by histidine 294. Residues arginine 295, histidine 327, and serine 379 each contribute to the substrate site.

This sequence belongs to the RuBisCO large chain family. Type I subfamily. Heterohexadecamer of 8 large chains and 8 small chains; disulfide-linked. The disulfide link is formed within the large subunit homodimers. Requires Mg(2+) as cofactor. In terms of processing, the disulfide bond which can form in the large chain dimeric partners within the hexadecamer appears to be associated with oxidative stress and protein turnover.

The protein localises to the plastid. The protein resides in the chloroplast. The enzyme catalyses 2 (2R)-3-phosphoglycerate + 2 H(+) = D-ribulose 1,5-bisphosphate + CO2 + H2O. It carries out the reaction D-ribulose 1,5-bisphosphate + O2 = 2-phosphoglycolate + (2R)-3-phosphoglycerate + 2 H(+). Its function is as follows. RuBisCO catalyzes two reactions: the carboxylation of D-ribulose 1,5-bisphosphate, the primary event in carbon dioxide fixation, as well as the oxidative fragmentation of the pentose substrate in the photorespiration process. Both reactions occur simultaneously and in competition at the same active site. The polypeptide is Ribulose bisphosphate carboxylase large chain (Carpinus caroliniana (American hornbeam)).